Reading from the N-terminus, the 359-residue chain is Alanine racemase (359 aa).

The active-site Proton acceptor; specific for D-alanine is K34. Residue K34 is modified to N6-(pyridoxal phosphate)lysine. R129 contributes to the substrate binding site. Y256 (proton acceptor; specific for L-alanine) is an active-site residue. Substrate is bound at residue M304.

The protein belongs to the alanine racemase family. The cofactor is pyridoxal 5'-phosphate.

It catalyses the reaction L-alanine = D-alanine. Its pathway is amino-acid biosynthesis; D-alanine biosynthesis; D-alanine from L-alanine: step 1/1. Its function is as follows. Catalyzes the interconversion of L-alanine and D-alanine. May also act on other amino acids. In Photobacterium profundum (strain SS9), this protein is Alanine racemase (alr).